The sequence spans 480 residues: DNA repair protein RadA (480 aa).

The C4-type zinc finger occupies cysteine 10–cysteine 27. Glycine 95–serine 102 is an ATP binding site. Residues lysine 254–glycine 258 carry the RadA KNRFG motif motif. The tract at residues aspartate 353–threonine 480 is lon-protease-like. A disordered region spans residues glycine 459 to threonine 480. Positions threonine 461–glycine 470 are enriched in polar residues.

This sequence belongs to the RecA family. RadA subfamily.

Its function is as follows. DNA-dependent ATPase involved in processing of recombination intermediates, plays a role in repairing DNA breaks. Stimulates the branch migration of RecA-mediated strand transfer reactions, allowing the 3' invading strand to extend heteroduplex DNA faster. Binds ssDNA in the presence of ADP but not other nucleotides, has ATPase activity that is stimulated by ssDNA and various branched DNA structures, but inhibited by SSB. Does not have RecA's homology-searching function. In Mycobacterium tuberculosis (strain CDC 1551 / Oshkosh), this protein is DNA repair protein RadA.